The sequence spans 134 residues: Large ribosomal subunit protein bL17 (134 aa).

The protein belongs to the bacterial ribosomal protein bL17 family. In terms of assembly, part of the 50S ribosomal subunit. Contacts protein L32.

The sequence is that of Large ribosomal subunit protein bL17 from Aromatoleum aromaticum (strain DSM 19018 / LMG 30748 / EbN1) (Azoarcus sp. (strain EbN1)).